The following is a 214-amino-acid chain: Probable nicotinate-nucleotide adenylyltransferase (214 aa).

This sequence belongs to the NadD family.

It catalyses the reaction nicotinate beta-D-ribonucleotide + ATP + H(+) = deamido-NAD(+) + diphosphate. It participates in cofactor biosynthesis; NAD(+) biosynthesis; deamido-NAD(+) from nicotinate D-ribonucleotide: step 1/1. Functionally, catalyzes the reversible adenylation of nicotinate mononucleotide (NaMN) to nicotinic acid adenine dinucleotide (NaAD). The chain is Probable nicotinate-nucleotide adenylyltransferase from Mycobacterium bovis (strain ATCC BAA-935 / AF2122/97).